The following is a 416-amino-acid chain: Serine hydroxymethyltransferase (416 aa).

(6S)-5,6,7,8-tetrahydrofolate is bound by residues L117 and 121-123 (GHL). At K225 the chain carries N6-(pyridoxal phosphate)lysine. (6S)-5,6,7,8-tetrahydrofolate is bound at residue 351-353 (SPF).

This sequence belongs to the SHMT family. In terms of assembly, homodimer. Requires pyridoxal 5'-phosphate as cofactor.

The protein resides in the cytoplasm. The catalysed reaction is (6R)-5,10-methylene-5,6,7,8-tetrahydrofolate + glycine + H2O = (6S)-5,6,7,8-tetrahydrofolate + L-serine. It functions in the pathway one-carbon metabolism; tetrahydrofolate interconversion. It participates in amino-acid biosynthesis; glycine biosynthesis; glycine from L-serine: step 1/1. In terms of biological role, catalyzes the reversible interconversion of serine and glycine with tetrahydrofolate (THF) serving as the one-carbon carrier. This reaction serves as the major source of one-carbon groups required for the biosynthesis of purines, thymidylate, methionine, and other important biomolecules. Also exhibits THF-independent aldolase activity toward beta-hydroxyamino acids, producing glycine and aldehydes, via a retro-aldol mechanism. The polypeptide is Serine hydroxymethyltransferase (Blochmanniella pennsylvanica (strain BPEN)).